The chain runs to 310 residues: N-acetyl-gamma-glutamyl-phosphate reductase (310 aa).

Residue Cys116 is part of the active site.

This sequence belongs to the NAGSA dehydrogenase family. Type 2 subfamily.

It localises to the cytoplasm. It carries out the reaction N-acetyl-L-glutamate 5-semialdehyde + phosphate + NADP(+) = N-acetyl-L-glutamyl 5-phosphate + NADPH + H(+). It functions in the pathway amino-acid biosynthesis; L-arginine biosynthesis; N(2)-acetyl-L-ornithine from L-glutamate: step 3/4. Its function is as follows. Catalyzes the NADPH-dependent reduction of N-acetyl-5-glutamyl phosphate to yield N-acetyl-L-glutamate 5-semialdehyde. This chain is N-acetyl-gamma-glutamyl-phosphate reductase, found in Chelativorans sp. (strain BNC1).